A 422-amino-acid chain; its full sequence is Keratin, type II cytoskeletal 80 (422 aa).

A head region spans residues 1-82 (MACRSCVVGF…DPAIQQQKNN (82 aa)). Serine 45 carries the post-translational modification Phosphoserine. The coil 1A stretch occupies residues 83-118 (EKEEMKVLNDKFASLIGKVQALEQRNQLLETRWHFL). Residues 83 to 394 (EKEEMKVLND…KLMEGEESRM (312 aa)) enclose the IF rod domain. The interval 119-135 (QSQDSATFDLGHLYEEY) is linker 1. The segment at 136 to 227 (QGRLQEELRK…SIYEQELKDL (92 aa)) is coil 1B. The segment at 228-251 (AAQLKDVSVTVGMDSRCHIDLSGI) is linker 12. The segment at 252–390 (VEEVKAQYDA…ATYRKLMEGE (139 aa)) is coil 2. Positions 391-422 (ESRMDMPSATVVSAVQARCRTAPTLPHPLCSL) are tail.

Belongs to the intermediate filament family. Heterotetramer of two type I and two type II keratins.

The chain is Keratin, type II cytoskeletal 80 (KRT80) from Bos taurus (Bovine).